Reading from the N-terminus, the 500-residue chain is Glycerol kinase (500 aa).

Residue T13 coordinates ADP. The ATP site is built by T13, T14, and S15. T13 is a sn-glycerol 3-phosphate binding site. R17 is an ADP binding site. Positions 83, 84, and 135 each coordinate sn-glycerol 3-phosphate. R83, E84, and Y135 together coordinate glycerol. Position 231 is a phosphohistidine; by HPr (H231). Position 245 (D245) interacts with sn-glycerol 3-phosphate. Glycerol-binding residues include D245 and Q246. Residues T267 and G310 each contribute to the ADP site. Residues T267, G310, Q314, and G411 each contribute to the ATP site. Residues G411 and N415 each contribute to the ADP site.

It belongs to the FGGY kinase family. Homotetramer and homodimer (in equilibrium). In terms of processing, the phosphoenolpyruvate-dependent sugar phosphotransferase system (PTS), including enzyme I, and histidine-containing protein (HPr) are required for the phosphorylation, which leads to the activation of the enzyme.

It carries out the reaction glycerol + ATP = sn-glycerol 3-phosphate + ADP + H(+). The protein operates within polyol metabolism; glycerol degradation via glycerol kinase pathway; sn-glycerol 3-phosphate from glycerol: step 1/1. Activated by phosphorylation and inhibited by fructose 1,6-bisphosphate (FBP). Its function is as follows. Key enzyme in the regulation of glycerol uptake and metabolism. Catalyzes the phosphorylation of glycerol to yield sn-glycerol 3-phosphate. This chain is Glycerol kinase, found in Oceanobacillus iheyensis (strain DSM 14371 / CIP 107618 / JCM 11309 / KCTC 3954 / HTE831).